Reading from the N-terminus, the 530-residue chain is Ubiquitin carboxyl-terminal hydrolase 17-like protein 17 (530 aa).

Residues 80–375 (AGLQNMGNTC…QAYVLFYIQK (296 aa)) form the USP domain. Cysteine 89 serves as the catalytic Nucleophile. Residue histidine 334 is the Proton acceptor of the active site. Basic and acidic residues-rich tracts occupy residues 382–392 (SESVSRGREPR) and 398–411 (DTDR…LKRD). Disordered regions lie at residues 382-411 (SESV…LKRD) and 477-530 (NHHP…LVCQ). Positions 493–505 (TPTHQESMNTGTL) are enriched in polar residues. Residues 510–524 (GRARRSKGKNKHSKR) show a composition bias toward basic residues.

Belongs to the peptidase C19 family. USP17 subfamily.

It localises to the nucleus. The protein resides in the endoplasmic reticulum. It catalyses the reaction Thiol-dependent hydrolysis of ester, thioester, amide, peptide and isopeptide bonds formed by the C-terminal Gly of ubiquitin (a 76-residue protein attached to proteins as an intracellular targeting signal).. Functionally, deubiquitinating enzyme that removes conjugated ubiquitin from specific proteins to regulate different cellular processes that may include cell proliferation, progression through the cell cycle, apoptosis, cell migration, and the cellular response to viral infection. This chain is Ubiquitin carboxyl-terminal hydrolase 17-like protein 17 (USP17L17), found in Homo sapiens (Human).